Here is a 294-residue protein sequence, read N- to C-terminus: Mitochondrial substrate carrier family protein ucpB (294 aa).

At 1–10 (MTSQESIGIK) the chain is on the mitochondrial intermembrane side. Solcar repeat units lie at residues 9 to 93 (IKFL…IKNY), 101 to 187 (TNLL…IKHM), and 197 to 288 (DGLQ…LRKV). Residues 11–31 (FLFGGLSCMGAAVVSNPVDVL) traverse the membrane as a helical segment. Over 32–67 (KTRFQIHGEGIDSKSLGLVNGTIKIIKNEGISAMYK) the chain is Mitochondrial matrix. The chain crosses the membrane as a helical span at residues 68-88 (GLTPSLLREATYSTLRMGGYD). Topologically, residues 89-106 (VIKNYFIDSNGKTNLLSK) are mitochondrial intermembrane. A helical membrane pass occupies residues 107-127 (VTSGALSGALGACITSPTDLI). The Mitochondrial matrix portion of the chain corresponds to 128–161 (KVRMQASSKGVKYDSISSAFKEIIAKEGIKGLWK). The helical transmembrane segment at 162-182 (GVGPTTQRAALLTASQIPSYD) threads the bilayer. Over 183 to 192 (HIKHMILDHG) the chain is Mitochondrial intermembrane. The helical transmembrane segment at 193–213 (IIQVDGLQVHIVSSIFAGLIA) threads the bilayer. Residues 214-267 (SITTSPVDLVKTRIMNQPFDSNGVGLIYKSSYDCFKKTFQSEGISGLYKGFLPN) are Mitochondrial matrix-facing. Residues 268–285 (WFRIGPHTIVTFILYEYL) form a helical membrane-spanning segment. The Mitochondrial intermembrane segment spans residues 286-294 (RKVSGIKPI).

Belongs to the mitochondrial carrier (TC 2.A.29) family.

Its subcellular location is the mitochondrion inner membrane. Functionally, mitochondrial solute carriers shuttle metabolites, nucleotides, and cofactors through the mitochondrial inner membrane. This Dictyostelium discoideum (Social amoeba) protein is Mitochondrial substrate carrier family protein ucpB (ucpB).